A 137-amino-acid polypeptide reads, in one-letter code: Large ribosomal subunit protein uL16 (137 aa).

The protein belongs to the universal ribosomal protein uL16 family. As to quaternary structure, part of the 50S ribosomal subunit.

In terms of biological role, binds 23S rRNA and is also seen to make contacts with the A and possibly P site tRNAs. The sequence is that of Large ribosomal subunit protein uL16 from Bartonella bacilliformis (strain ATCC 35685 / KC583 / Herrer 020/F12,63).